The sequence spans 234 residues: Phosphatidylcholine synthase (234 aa).

Topologically, residues 1–3 (MKN) are cytoplasmic. A helical transmembrane segment spans residues 4 to 24 (INLILAWLVHIFTASGLIVGL). The Periplasmic segment spans residues 25-26 (YS). The helical transmembrane segment at 27 to 47 (IISIVNGNYSLLLKLTVIGLI) threads the bilayer. At 48–75 (IDGIDGTMARKLKVKELIPEIDGTLLDN) the chain is on the cytoplasmic side. A helical transmembrane segment spans residues 76–96 (ITDYINYTFIPVIFFYLGEFI). Residues 97–98 (EE) are Periplasmic-facing. Residues 99–116 (KYKVAICIGILLSSAYQF) traverse the membrane as a helical segment. The Cytoplasmic portion of the chain corresponds to 117–126 (SRTDAKTNDN). Residues 127–147 (YFRGFPSLWNLFVILNIIFKM) form a helical membrane-spanning segment. The Periplasmic segment spans residues 148–149 (EQ). Residues 150–170 (ITNLITMSICIITSFIPIKFI) form a helical membrane-spanning segment. The Cytoplasmic segment spans residues 171-180 (YPSKTKELRK). A helical transmembrane segment spans residues 181–201 (ITIPITIISCLIFVVSIFSEL). Topologically, residues 202-207 (STTALK) are periplasmic. The helical transmembrane segment at 208 to 228 (MAKTVLILYFAYLTLASIYLT) threads the bilayer. Residues 229 to 234 (YKTRNR) lie on the Cytoplasmic side of the membrane.

This sequence belongs to the CDP-alcohol phosphatidyltransferase class-I family. It depends on Mn(2+) as a cofactor.

It is found in the cell inner membrane. The catalysed reaction is a CDP-1,2-diacyl-sn-glycerol + choline = a 1,2-diacyl-sn-glycero-3-phosphocholine + CMP + H(+). In terms of biological role, condenses choline with CDP-diglyceride to produce phosphatidylcholine and CMP. The protein is Phosphatidylcholine synthase of Borreliella burgdorferi (strain ATCC 35210 / DSM 4680 / CIP 102532 / B31) (Borrelia burgdorferi).